Consider the following 961-residue polypeptide: Outer capsid protein VP2 (961 aa).

This sequence belongs to the orbivirus VP2 family.

The protein resides in the virion. Functionally, the VP2 protein is one of the two proteins (with VP5) which constitute the virus particle outer capsid. It is the major target of the host immunogenic response. Responsible for viral attachment to target host cell, probably by binding to sialic acid. This attachment induces virion internalization predominantly through clathrin-dependent endocytosis. The sequence is that of Outer capsid protein VP2 (Segment-2) from Bluetongue virus 1 (isolate South Africa vaccine) (BTV 1).